Consider the following 436-residue polypeptide: APO protein 1, chloroplastic (436 aa).

A chloroplast-targeting transit peptide spans 1 to 47 (MLLVSPACRGVYLQTIDPKPIDFSARASYALCFQIPTSIPKRECLMR). APO domains are found at residues 155–240 (ACSE…EIPE) and 329–414 (ACGY…RVPQ).

Belongs to the APO family. As to expression, expressed at low level. Expressed at higher level in leaves. Expressed at lower level in roots, stems, siliques and flowers.

Its subcellular location is the plastid. The protein localises to the chloroplast. Functionally, involved in the stable assembly of several 4Fe-4S cluster-containing complexes of chloroplasts. May participate in 4Fe-4S cofactor incorporation into psaA and/or psaB during translation. The polypeptide is APO protein 1, chloroplastic (APO1) (Arabidopsis thaliana (Mouse-ear cress)).